Here is a 208-residue protein sequence, read N- to C-terminus: RNA-binding protein KhpB (208 aa).

The tract at residues 5–55 (TAAGRNVDEAVQSGLQELGLTKDKVEITVIEEGNKGFLGIFGKKPAIVKLV) is jag_N domain. Residues 58–135 (IDPIQQAKLY…GQYKNVTVDA (78 aa)) form the KH domain. Residues 140 to 208 (LKRKETLSQL…NRHLVISHKR (69 aa)) enclose the R3H domain.

It belongs to the KhpB RNA-binding protein family. In terms of assembly, forms a complex with KhpA.

It is found in the cytoplasm. Its function is as follows. A probable RNA chaperone. Forms a complex with KhpA which binds to cellular RNA and controls its expression. Plays a role in peptidoglycan (PG) homeostasis and cell length regulation. The sequence is that of RNA-binding protein KhpB from Bacillus subtilis (strain 168).